A 267-amino-acid chain; its full sequence is NAD kinase (267 aa).

D45 functions as the Proton acceptor in the catalytic mechanism. Residues D45 to G46, N122 to E123, R148, D150, T161 to S166, A185, and Q223 contribute to the NAD(+) site.

This sequence belongs to the NAD kinase family. The cofactor is a divalent metal cation.

It is found in the cytoplasm. The catalysed reaction is NAD(+) + ATP = ADP + NADP(+) + H(+). Involved in the regulation of the intracellular balance of NAD and NADP, and is a key enzyme in the biosynthesis of NADP. Catalyzes specifically the phosphorylation on 2'-hydroxyl of the adenosine moiety of NAD to yield NADP. In Levilactobacillus brevis (strain ATCC 367 / BCRC 12310 / CIP 105137 / JCM 1170 / LMG 11437 / NCIMB 947 / NCTC 947) (Lactobacillus brevis), this protein is NAD kinase.